Reading from the N-terminus, the 441-residue chain is Ribosomal protein uS12 methylthiotransferase RimO (441 aa).

The MTTase N-terminal domain maps to P8 to P118. [4Fe-4S] cluster-binding residues include C17, C53, C82, C150, C154, and C157. Residues L136–E373 form the Radical SAM core domain. The TRAM domain maps to Q376–V441.

Belongs to the methylthiotransferase family. RimO subfamily. [4Fe-4S] cluster serves as cofactor.

It localises to the cytoplasm. The catalysed reaction is L-aspartate(89)-[ribosomal protein uS12]-hydrogen + (sulfur carrier)-SH + AH2 + 2 S-adenosyl-L-methionine = 3-methylsulfanyl-L-aspartate(89)-[ribosomal protein uS12]-hydrogen + (sulfur carrier)-H + 5'-deoxyadenosine + L-methionine + A + S-adenosyl-L-homocysteine + 2 H(+). Its function is as follows. Catalyzes the methylthiolation of an aspartic acid residue of ribosomal protein uS12. This chain is Ribosomal protein uS12 methylthiotransferase RimO, found in Salmonella arizonae (strain ATCC BAA-731 / CDC346-86 / RSK2980).